The sequence spans 268 residues: 4-hydroxy-tetrahydrodipicolinate reductase (268 aa).

8 to 13 (GAAGRM) contacts NAD(+). Position 36 (R36) interacts with NADP(+). NAD(+)-binding positions include 99-101 (GTT) and 123-126 (AANF). Catalysis depends on H156, which acts as the Proton donor/acceptor. H157 serves as a coordination point for (S)-2,3,4,5-tetrahydrodipicolinate. The Proton donor role is filled by K160. 166-167 (GT) provides a ligand contact to (S)-2,3,4,5-tetrahydrodipicolinate.

The protein belongs to the DapB family.

It is found in the cytoplasm. It catalyses the reaction (S)-2,3,4,5-tetrahydrodipicolinate + NAD(+) + H2O = (2S,4S)-4-hydroxy-2,3,4,5-tetrahydrodipicolinate + NADH + H(+). The catalysed reaction is (S)-2,3,4,5-tetrahydrodipicolinate + NADP(+) + H2O = (2S,4S)-4-hydroxy-2,3,4,5-tetrahydrodipicolinate + NADPH + H(+). It functions in the pathway amino-acid biosynthesis; L-lysine biosynthesis via DAP pathway; (S)-tetrahydrodipicolinate from L-aspartate: step 4/4. Catalyzes the conversion of 4-hydroxy-tetrahydrodipicolinate (HTPA) to tetrahydrodipicolinate. The chain is 4-hydroxy-tetrahydrodipicolinate reductase from Pseudomonas fluorescens (strain SBW25).